Consider the following 222-residue polypeptide: Nucleoside triphosphate pyrophosphatase (222 aa).

Aspartate 82 acts as the Proton acceptor in catalysis.

This sequence belongs to the Maf family. A divalent metal cation serves as cofactor.

The protein localises to the cytoplasm. It carries out the reaction a ribonucleoside 5'-triphosphate + H2O = a ribonucleoside 5'-phosphate + diphosphate + H(+). It catalyses the reaction a 2'-deoxyribonucleoside 5'-triphosphate + H2O = a 2'-deoxyribonucleoside 5'-phosphate + diphosphate + H(+). In terms of biological role, nucleoside triphosphate pyrophosphatase. May have a dual role in cell division arrest and in preventing the incorporation of modified nucleotides into cellular nucleic acids. The protein is Nucleoside triphosphate pyrophosphatase of Mycobacterium bovis (strain ATCC BAA-935 / AF2122/97).